The chain runs to 556 residues: 2-succinyl-5-enolpyruvyl-6-hydroxy-3-cyclohexene-1-carboxylate synthase (556 aa).

It belongs to the TPP enzyme family. MenD subfamily. In terms of assembly, homodimer. The cofactor is Mg(2+). Mn(2+) is required as a cofactor. It depends on thiamine diphosphate as a cofactor.

The enzyme catalyses isochorismate + 2-oxoglutarate + H(+) = 5-enolpyruvoyl-6-hydroxy-2-succinyl-cyclohex-3-ene-1-carboxylate + CO2. Its pathway is quinol/quinone metabolism; 1,4-dihydroxy-2-naphthoate biosynthesis; 1,4-dihydroxy-2-naphthoate from chorismate: step 2/7. It functions in the pathway quinol/quinone metabolism; menaquinone biosynthesis. Its function is as follows. Catalyzes the thiamine diphosphate-dependent decarboxylation of 2-oxoglutarate and the subsequent addition of the resulting succinic semialdehyde-thiamine pyrophosphate anion to isochorismate to yield 2-succinyl-5-enolpyruvyl-6-hydroxy-3-cyclohexene-1-carboxylate (SEPHCHC). The sequence is that of 2-succinyl-5-enolpyruvyl-6-hydroxy-3-cyclohexene-1-carboxylate synthase from Shigella boydii serotype 18 (strain CDC 3083-94 / BS512).